A 432-amino-acid chain; its full sequence is RNA binding protein fox-1 homolog 2 (432 aa).

Residues 1–21 show a composition bias toward low complexity; it reads MAEGGQAQQQPPQLGPGAAAR. The interval 1–169 is disordered; that stretch reads MAEGGQAQQQ…STPKRLHVSN (169 aa). 2 stretches are compositionally biased toward polar residues: residues 60-69 and 101-121; these read QGNQEPTTTP and YAGQ…PHGE. Residues 122–159 show a composition bias toward low complexity; sequence QSSNSPSNQNGSLTQTEGGAQTDGQQSQTQSSENSESK. An RRM domain is found at 163–239; sequence KRLHVSNIPF…RKIEVNNATA (77 aa). Residue R323 is modified to Omega-N-methylarginine. Asymmetric dimethylarginine is present on residues R339 and R371. 2 positions are modified to asymmetric dimethylarginine; alternate: R423 and R428. An omega-N-methylarginine; alternate mark is found at R423 and R428.

In terms of assembly, interacts with ER-alpha N-terminal activation domain. Interacts with RBPMS; the interaction allows cooperative assembly of stable cell-specific alternative splicing regulatory complexes.

The protein localises to the nucleus. It is found in the cytoplasm. RNA-binding protein that regulates alternative splicing events by binding to 5'-UGCAUGU-3' elements. Prevents binding of U2AF2 to the 3'-splice site. Regulates alternative splicing of tissue-specific exons and of differentially spliced exons during erythropoiesis. Seems to act as a coregulatory factor of ER-alpha. Together with RNA binding proteins RBPMS and MBNL1/2, activates vascular smooth muscle cells alternative splicing events. This is RNA binding protein fox-1 homolog 2 (Rbfox2) from Rattus norvegicus (Rat).